The chain runs to 428 residues: S-adenosylmethionine synthase (428 aa).

Position 14 (H14) interacts with ATP. Position 16 (D16) interacts with Mg(2+). E42 serves as a coordination point for K(+). Residues E55 and Q98 each contribute to the L-methionine site. Residues 98-108 (QSGDINRGVER) are flexible loop. ATP contacts are provided by residues 165-167 (DAK), 251-252 (KF), D260, 266-267 (RK), A283, and K287. D260 is a binding site for L-methionine. K291 provides a ligand contact to L-methionine.

Belongs to the AdoMet synthase family. As to quaternary structure, homotetramer; dimer of dimers. It depends on Mg(2+) as a cofactor. K(+) is required as a cofactor.

The protein resides in the cytoplasm. It catalyses the reaction L-methionine + ATP + H2O = S-adenosyl-L-methionine + phosphate + diphosphate. The protein operates within amino-acid biosynthesis; S-adenosyl-L-methionine biosynthesis; S-adenosyl-L-methionine from L-methionine: step 1/1. In terms of biological role, catalyzes the formation of S-adenosylmethionine (AdoMet) from methionine and ATP. The overall synthetic reaction is composed of two sequential steps, AdoMet formation and the subsequent tripolyphosphate hydrolysis which occurs prior to release of AdoMet from the enzyme. The protein is S-adenosylmethionine synthase of Parabacteroides distasonis (strain ATCC 8503 / DSM 20701 / CIP 104284 / JCM 5825 / NCTC 11152).